A 265-amino-acid chain; its full sequence is 5'-nucleotidase SurE (265 aa).

Positions 8, 9, 40, and 98 each coordinate a divalent metal cation.

It belongs to the SurE nucleotidase family. It depends on a divalent metal cation as a cofactor.

It localises to the cytoplasm. It carries out the reaction a ribonucleoside 5'-phosphate + H2O = a ribonucleoside + phosphate. Its function is as follows. Nucleotidase that shows phosphatase activity on nucleoside 5'-monophosphates. The sequence is that of 5'-nucleotidase SurE from Nostoc sp. (strain PCC 7120 / SAG 25.82 / UTEX 2576).